The chain runs to 479 residues: ATP-dependent protease ATPase subunit HslU (479 aa).

Residues Ile-32, 74–79 (GVGKTE), Asp-290, Glu-355, and Arg-427 each bind ATP.

This sequence belongs to the ClpX chaperone family. HslU subfamily. As to quaternary structure, a double ring-shaped homohexamer of HslV is capped on each side by a ring-shaped HslU homohexamer. The assembly of the HslU/HslV complex is dependent on binding of ATP.

It localises to the cytoplasm. ATPase subunit of a proteasome-like degradation complex; this subunit has chaperone activity. The binding of ATP and its subsequent hydrolysis by HslU are essential for unfolding of protein substrates subsequently hydrolyzed by HslV. HslU recognizes the N-terminal part of its protein substrates and unfolds these before they are guided to HslV for hydrolysis. This Leptospira interrogans serogroup Icterohaemorrhagiae serovar Lai (strain 56601) protein is ATP-dependent protease ATPase subunit HslU.